The sequence spans 571 residues: Urease subunit alpha (571 aa).

One can recognise a Urease domain in the interval 131-571 (GGIDAHIHFI…LPMAQRYFLF (441 aa)). His136, His138, and Lys219 together coordinate Ni(2+). At Lys219 the chain carries N6-carboxylysine. Residue His221 coordinates substrate. Ni(2+) contacts are provided by His248 and His274. His322 functions as the Proton donor in the catalytic mechanism. Residue Asp362 coordinates Ni(2+).

It belongs to the metallo-dependent hydrolases superfamily. Urease alpha subunit family. In terms of assembly, heterotrimer of UreA (gamma), UreB (beta) and UreC (alpha) subunits. Three heterotrimers associate to form the active enzyme. Ni cation is required as a cofactor. Post-translationally, carboxylation allows a single lysine to coordinate two nickel ions.

It is found in the cytoplasm. The enzyme catalyses urea + 2 H2O + H(+) = hydrogencarbonate + 2 NH4(+). It functions in the pathway nitrogen metabolism; urea degradation; CO(2) and NH(3) from urea (urease route): step 1/1. The polypeptide is Urease subunit alpha (Nostoc punctiforme (strain ATCC 29133 / PCC 73102)).